We begin with the raw amino-acid sequence, 727 residues long: Glycerol-3-phosphate dehydrogenase, mitochondrial (727 aa).

Residues 1-42 (MAFQKAVKGTILVGGGALATVLGLSPFAHYRRKQVSLAYVEA) constitute a mitochondrion transit peptide. Residue 71–99 (DILVIGGGATGCGCALDAVTRGLKTALVE) coordinates FAD. A Phosphotyrosine modification is found at Tyr-601. 2 EF-hand domains span residues 623–658 (SDID…INVQ) and 659–694 (MDEN…VQKG). Residues Asp-672, Asn-674, Asn-676, Gln-678, and Glu-683 each contribute to the Ca(2+) site.

It belongs to the FAD-dependent glycerol-3-phosphate dehydrogenase family. Requires FAD as cofactor.

Its subcellular location is the mitochondrion inner membrane. The enzyme catalyses a quinone + sn-glycerol 3-phosphate = dihydroxyacetone phosphate + a quinol. It participates in polyol metabolism; glycerol degradation via glycerol kinase pathway; glycerone phosphate from sn-glycerol 3-phosphate (anaerobic route): step 1/1. Its activity is regulated as follows. Calcium-binding enhance the activity of the enzyme. Functionally, calcium-responsive mitochondrial glycerol-3-phosphate dehydrogenase which seems to be a key component of the pancreatic beta-cell glucose-sensing device. This Mus musculus (Mouse) protein is Glycerol-3-phosphate dehydrogenase, mitochondrial.